The following is a 949-amino-acid chain: Thrombospondin-4-B (949 aa).

A signal peptide spans 1-22 (MAGTMHLLTAVSLILMLSSANA). The region spanning 23–198 (ESTVYNLLTS…LEELKLAYGD (176 aa)) is the Laminin G-like domain. 21 cysteine pairs are disulfide-bonded: cysteine 276/cysteine 287, cysteine 281/cysteine 296, cysteine 299/cysteine 310, cysteine 316/cysteine 327, cysteine 321/cysteine 336, cysteine 339/cysteine 363, cysteine 369/cysteine 383, cysteine 377/cysteine 392, cysteine 395/cysteine 407, cysteine 413/cysteine 427, cysteine 421/cysteine 437, cysteine 439/cysteine 450, cysteine 466/cysteine 471, cysteine 476/cysteine 496, cysteine 512/cysteine 532, cysteine 535/cysteine 555, cysteine 571/cysteine 591, cysteine 594/cysteine 614, cysteine 632/cysteine 652, cysteine 672/cysteine 692, and cysteine 708/cysteine 929. The EGF-like 1; calcium-binding domain maps to 312 to 349 (DVDECQFNPCFPGVRCVNMAPGFRCEACPLGFTGKPLE). Residues 365–408 (DIDECKGPDNGGCTANSICVNSVGSYQCGRCKTGFTGDQIRGCK) form the EGF-like 2; calcium-binding domain. The EGF-like 3 domain occupies 409 to 451 (PEKSCGNRLQNPCDPNAQCTEERDGTITCQCGIGWAGNGYLCG). TSP type-3 repeat units follow at residues 452–484 (KDTD…NSGQ), 485–520 (EDAD…NINQ), 521–543 (QNSD…NPDQ), 544–579 (RDTD…NRDQ), 580–602 (LDRD…NPNQ), 603–640 (SDID…NSSQ), 641–680 (LDTD…NPEQ), and 681–716 (IDDN…EITL). The segment at 578–671 (DQLDRDGDGV…PDSLPPGPDN (94 aa)) is disordered. N-linked (GlcNAc...) asparagine glycosylation is found at asparagine 601 and asparagine 637. The segment covering 649 to 660 (GDECDDDDDNDG) has biased composition (acidic residues). The TSP C-terminal domain occupies 720-934 (RAYQTVVLDP…LKYRCNDTIP (215 aa)). N-linked (GlcNAc...) asparagine glycosylation occurs at asparagine 930.

Belongs to the thrombospondin family. As to quaternary structure, homotrimer; disulfide-linked.

It localises to the endoplasmic reticulum. It is found in the sarcoplasmic reticulum. The protein localises to the secreted. The protein resides in the extracellular space. Its subcellular location is the extracellular matrix. Adhesive glycoprotein that mediates cell-to-cell and cell-to-matrix interactions and may be involved in various processes including cellular proliferation, migration, adhesion and attachment. May play a role in ER stress response. This is Thrombospondin-4-B (thbs4b) from Danio rerio (Zebrafish).